The following is a 291-amino-acid chain: tRNA U34 carboxymethyltransferase (291 aa).

Carboxy-S-adenosyl-L-methionine is bound by residues K61, W75, K80, G100, 122-124 (DPS), 149-150 (VE), Y169, and R284.

This sequence belongs to the class I-like SAM-binding methyltransferase superfamily. CmoB family. In terms of assembly, homotetramer.

The enzyme catalyses carboxy-S-adenosyl-L-methionine + 5-hydroxyuridine(34) in tRNA = 5-carboxymethoxyuridine(34) in tRNA + S-adenosyl-L-homocysteine + H(+). In terms of biological role, catalyzes carboxymethyl transfer from carboxy-S-adenosyl-L-methionine (Cx-SAM) to 5-hydroxyuridine (ho5U) to form 5-carboxymethoxyuridine (cmo5U) at position 34 in tRNAs. The polypeptide is tRNA U34 carboxymethyltransferase (Campylobacter jejuni subsp. jejuni serotype O:2 (strain ATCC 700819 / NCTC 11168)).